Here is a 1968-residue protein sequence, read N- to C-terminus: MGREYKFTGIAAKLNPLNCRLKLEIAEDLDERVPTTSTSCSVASVAAATATINTTAPTVLTKSELQKTLQKTSSSFSSSLATTTTTSSHLNAPVESMEGHSSLASYSHHHPSSSHHHHPGQQQSSSSSSSSHLQDFQSPPSASHPYYHQQQPQHQHQQAQQYGQATGSTNGGGQQQMTSMYGGNDYDQHQLHHQNQQHQASTSTQQFHHPQRPPPPQYDQPSSSTGSSLPPLHTVRYEQLPPPPSNQRTPTQQLQYPVKVVEAGGQAYAQQVQQAQQSNRSGAAGVNSALQPKPLPPLSSITSISSSAAGSSISAPSTSQPSTTSSLITSPPSTSSSSMAPRKTPPNASSSSLIKRQSQDVQEQQRVDFEVARNVSQIMSKNGLKVMHEPLLTGSLPQLAPLAPLPPPKSGVYQCPNCNRNLANARNLQRHRQTCGSAQHAAPQLAAMLQRSPPPCASAPPVAPPTAPSTSFQHHNSTGNLTLSYSSSSSRHQSSLYSPQLEHQDLVGNPNVMLSDGYEYKDDPMLYQGPSGLSDSIWSRDDSFHSEPPSASHDQLDMDHLGFPDPLQDPLHHLDSFDSADHRKETPRECHEPDELMTLDPTPPQCGSERFYGINIDDMPLSLDCDEPLMRSESASLSSSSQGRNTPAAVFTCEACKKSVSSERSLRRHYNTCKMFQTELAASGEERPPTTKRKPATKRPSKKKEASEGPEKNSAILAALRKEPAAPQQPQQLQFQQNYQPSPQFQAPYGGGSLPSISASWLHSASTSAAAAAPERSEMFTSPIVTSAPNPYIHQLPHQQPQQQKSSPLEDLLNEQDESADDDGDSRSSSGTVSNSTTTTTTATTTSSKSTGNPLFTCEHCARQLCSMSNLKRHRATCKVAASSSSNSAASRPPSQPSTPATAPATPMLQASQAPQPLQAPPQSPMETTATVTYTKTTVPPSVANTWNTEKAQLISPKPRSQTIFSEASSSMTVGDALRAQQHQQKMDQQIQIQFQQQQQQRFQHHQQQQQAGRIPPRPPNPILNQVQNPPQQVQHNQHQNQMLNPIRQPLLQSPPPPPPKKGLIEHKNTDLVLITSEPLAERMDAKRRSSEGLVAVTSTPLPPIQLPQRSQAPAPSRQQQQQPPVAYQVQFNGRPLPPMQLPPLQNPHNQQQQHQMLHQSQMNYQQVQQVQQVQHVQQQQNLQNQHHHQQQHHQQNQQQAPGNRSRSHSNVGKMEQEAQRQGSPLDSIITSVPLSIEVHHHIMKPGPLEQGQSSVDSQSTAEPSPRKASQQAYICPECKKTYASRKNVKRHRMAVHKLTLDEILANPEQPALDPLSAVGGAGRRHTVAGLETPDSALKPAPTKRKASEAPSAGVATKKGKAMAASVDEIQVKEEEEDQKEETVGSVERQEPPKKPVADDHKSAIAPLPPANTIMPPPPPYNQASAVPLNPPRTALPPLQLPPLQPLQSESPSWASMSAPPTALIPRTPRSSEFADEEDTRAMAKIAAELKRSAEDWPVLAVIEGVAAEPTNGEDIDEDEILIKRLRQGGVLEDVGDVSDLLRDVQGGVDGEPFSEDMLLEKNLSTASSVGLPSLASPGEQFGYQQYSQHPQQHPQQHPQQHPQQQQQVWNPNYEFQGYMQQQHPPMPVSQQFQQPLLQRPASQPPPARPIVKNSRRPSTTPKPPPNLTCSGCKKILGSDYSLRRHRAGCADVQQALNPEYPRPPKRKAAREAQKINEAEILASMPDPQMVAERSAAVAEAAAAEAAVERIGALPPPSVVHEIVHQVNADRQSMKKHNKTTSPPPAQEAPPTCAPDDPMSSSSSSSTSSASPLQGGAKPSTNQARHYCQFPECGKNFSSEWNLARHTRESCKMTTRAHSYEPTSAADKIDLIFMDKSKRRVSRTFLCTVSSLISYWLGEQGDRLELDTKWEHFQLLLDVHTLKVAITADNINLIAEQSKKYQLEHVIRMADQFMMNTNYTTPPTHVQL.

Low complexity predominate over residues 72–88 (TSSSFSSSLATTTTTSS). 2 disordered regions span residues 72–252 (TSSS…TPTQ) and 271–364 (QVQQ…VQEQ). A compositionally biased stretch (basic residues) spans 107-119 (SHHHPSSSHHHHP). Composition is skewed to low complexity over residues 120–134 (GQQQSSSSSSSSHLQ), 144–165 (HPYYHQQQPQHQHQQAQQYGQA), 219–232 (DQPSSSTGSSLPPL), and 298–338 (LSSI…SSSS). The segment covering 346-362 (PNASSSSLIKRQSQDVQ) has biased composition (polar residues). A C2H2-type 1 zinc finger spans residues 413-440 (YQCPNCNRNLANARNLQRHRQTCGSAQH). Disordered regions lie at residues 451–499 (RSPP…LYSP) and 538–601 (WSRD…TLDP). A compositionally biased stretch (pro residues) spans 452–467 (SPPPCASAPPVAPPTA). The span at 472–482 (FQHHNSTGNLT) shows a compositional bias: polar residues. A compositionally biased stretch (low complexity) spans 483 to 498 (LSYSSSSSRHQSSLYS). The span at 570-594 (PLHHLDSFDSADHRKETPRECHEPD) shows a compositional bias: basic and acidic residues. Residues 651–672 (FTCEACKKSVSSERSLRRHYNT) form a C2H2-type 2; degenerate zinc finger. Disordered stretches follow at residues 681-712 (AASGEERPPTTKRKPATKRPSKKKEASEGPEK) and 785-854 (VTSA…TGNP). A compositionally biased stretch (basic residues) spans 690–702 (TTKRKPATKRPSK). Residues 794–804 (HQLPHQQPQQQ) show a composition bias toward low complexity. Residues 812–824 (LLNEQDESADDDG) are compositionally biased toward acidic residues. A compositionally biased stretch (low complexity) spans 827-851 (RSSSGTVSNSTTTTTTATTTSSKST). Residues 856-875 (FTCEHCARQLCSMSNLKRHR) form a C2H2-type 3; degenerate zinc finger. Disordered regions lie at residues 882-905 (ASSSSNSAASRPPSQPSTPATAPA), 975-1069 (GDAL…EHKN), 1083-1227 (RMDA…SPLD), and 1246-1273 (PGPLEQGQSSVDSQSTAEPSPRKASQQA). 3 stretches are compositionally biased toward low complexity: residues 981-1015 (QQHQQKMDQQIQIQFQQQQQQRFQHHQQQQQAGRI), 1023-1046 (ILNQVQNPPQQVQHNQHQNQMLNP), and 1108-1131 (PQRSQAPAPSRQQQQQPPVAYQVQ). The segment covering 1136-1146 (PLPPMQLPPLQ) has biased composition (pro residues). The span at 1147–1185 (NPHNQQQQHQMLHQSQMNYQQVQQVQQVQHVQQQQNLQN) shows a compositional bias: low complexity. Composition is skewed to polar residues over residues 1201-1211 (APGNRSRSHSN) and 1251-1273 (QGQSSVDSQSTAEPSPRKASQQA). A C2H2-type 4 zinc finger spans residues 1274-1297 (YICPECKKTYASRKNVKRHRMAVH). Disordered regions lie at residues 1333 to 1478 (TPDS…ADEE), 1569 to 1608 (SVGLPSLASPGEQFGYQQYSQHPQQHPQQHPQQHPQQQQQ), 1624 to 1671 (HPPM…LTCS), and 1769 to 1822 (ADRQ…PSTN). Residues 1388–1403 (ERQEPPKKPVADDHKS) are compositionally biased toward basic and acidic residues. 2 stretches are compositionally biased toward pro residues: residues 1407 to 1421 (PLPPANTIMPPPPPY) and 1429 to 1445 (LNPPRTALPPLQLPPLQ). The segment covering 1589–1608 (QHPQQHPQQHPQQHPQQQQQ) has biased composition (low complexity). Positions 1624–1633 (HPPMPVSQQF) are enriched in polar residues. The C2H2-type 5; degenerate zinc finger occupies 1668 to 1694 (LTCSGCKKILGSDYSLRRHRAGCADVQ). Positions 1800–1811 (SSSSSSSTSSAS) are enriched in low complexity. A C2H2-type 6 zinc finger spans residues 1826 to 1858 (HYCQFPECGKNFSSEWNLARHTRESCKMTTRAH).

Expressed in seam cells, intestine cells, pharyngeal muscles and nerve ring neurons.

Its subcellular location is the nucleus. The protein localises to the cytoplasm. RNA-binding protein, which regulates the expression of proteins required to control developmental timing of events during the L2 to L3 larval stage switch. Binds to the 3'UTR of the transcript of the heterochronic protein lin-28 to post-transcriptionally negatively regulate its expression in certain tissue types in the later larval stages. During larval development, controls the timing of seam cell division and terminal differentiation into adult alae. In vitro, it can also bind to DNA through its first zinc finger. May bind directly or indirectly to the promoter of the sex-determining factor xol-1 to activate its transcription. Its activation of xol-1 transcription controls sex determination and X chromosome dosage compensation to promote male development. Through the negative regulation of lin-28 transcript, it also has a role in the fox-1-sex-1-mediated determination of sexual fate. Acts in the intestine to play a role in regulating adult lifespan. The protein is Signal element on autosome protein 2 of Caenorhabditis elegans.